The chain runs to 755 residues: Tryptophan 2-monooxygenase (755 aa).

FMN is bound by residues Ser-247, Glu-267, Lys-275, and Arg-295. Arg-295 contributes to the substrate binding site.

It belongs to the tryptophan 2-monooxygenase family. The cofactor is FMN.

The enzyme catalyses L-tryptophan + O2 = indole-3-acetamide + CO2 + H2O. It functions in the pathway plant hormone metabolism; auxin biosynthesis. The sequence is that of Tryptophan 2-monooxygenase (iaaM) from Agrobacterium vitis (Rhizobium vitis).